The sequence spans 525 residues: Retinoblastoma-binding-like protein E (525 aa).

WD repeat units lie at residues 25-66 (PKNI…IVRT), 69-108 (HHTG…ILYS), 222-261 (SSNT…LYQQ), 267-312 (DSVN…KDLE), and 313-352 (GPKE…NWSS). Disordered regions lie at residues 371–398 (DEFD…RNPY) and 462–525 (EKYQ…KKRK). Residues 383–392 (QEVNNNNNNN) are compositionally biased toward low complexity. Over residues 462–471 (EKYQKDKEDS) the composition is skewed to basic and acidic residues. The span at 472 to 500 (SSTTSNSTISSSSSPSPSSSSTTTTTTTS) shows a compositional bias: low complexity. Residues 501 to 525 (QKKDETQKKEKSTKKERNSDSKKRK) are compositionally biased toward basic and acidic residues.

Its subcellular location is the nucleus. Involved in mono-, di- and trimethylation at 'Lys-4' of histone H3. Histone H3 'Lys-4' methylation represents a specific tag for epigenetic transcriptional activation. The polypeptide is Retinoblastoma-binding-like protein E (Dictyostelium discoideum (Social amoeba)).